We begin with the raw amino-acid sequence, 294 residues long: Protoheme IX farnesyltransferase (294 aa).

Helical transmembrane passes span 22-42 (VTQL…PELP), 46-66 (IVVA…AINC), 89-109 (ITVP…MWVL), 116-136 (LTMW…TIIL), 143-163 (NIVI…AAVA), 170-190 (AWIL…ALAL), 212-232 (FTQF…MLPF), 234-254 (VGMS…IFVW), and 272-292 (FAYS…DHYL).

It belongs to the UbiA prenyltransferase family. Protoheme IX farnesyltransferase subfamily.

Its subcellular location is the cell inner membrane. The enzyme catalyses heme b + (2E,6E)-farnesyl diphosphate + H2O = Fe(II)-heme o + diphosphate. It functions in the pathway porphyrin-containing compound metabolism; heme O biosynthesis; heme O from protoheme: step 1/1. Converts heme B (protoheme IX) to heme O by substitution of the vinyl group on carbon 2 of heme B porphyrin ring with a hydroxyethyl farnesyl side group. This chain is Protoheme IX farnesyltransferase, found in Janthinobacterium sp. (strain Marseille) (Minibacterium massiliensis).